The sequence spans 609 residues: Threonine--tRNA ligase (609 aa).

Residues 1–143 form an editing domain region; it reads MRVLYLHTER…SFKPGDSRAE (143 aa). 2 catalytic regions span residues 195–491 and 196–491; these read PRYL…PRLP and RYLE…PRLP. Residues cysteine 288, histidine 339, and histidine 460 each coordinate Zn(2+).

It belongs to the class-II aminoacyl-tRNA synthetase family. In terms of assembly, homodimer. Zn(2+) serves as cofactor.

The protein localises to the cytoplasm. The catalysed reaction is tRNA(Thr) + L-threonine + ATP = L-threonyl-tRNA(Thr) + AMP + diphosphate + H(+). In terms of biological role, catalyzes the attachment of threonine to tRNA(Thr) in a two-step reaction: L-threonine is first activated by ATP to form Thr-AMP and then transferred to the acceptor end of tRNA(Thr). Also edits incorrectly charged L-seryl-tRNA(Thr). The polypeptide is Threonine--tRNA ligase (Pyrobaculum neutrophilum (strain DSM 2338 / JCM 9278 / NBRC 100436 / V24Sta) (Thermoproteus neutrophilus)).